The chain runs to 213 residues: Ras-related protein Rab-4B (213 aa).

Ala-2 carries the post-translational modification N-acetylalanine. Positions 18, 19, 20, 21, 22, and 23 each coordinate GDP. The GTP site is built by Gly-18, Thr-19, Gly-20, Lys-21, Ser-22, Cys-23, Ser-37, His-39, and Thr-40. Mg(2+) is bound at residue Ser-22. A Switch 1 motif is present at residues 39–44; the sequence is HTIGVE. The Mg(2+) site is built by Thr-40 and Asp-63. The Switch 2 motif lies at 65–74; the sequence is AGQERFRSVT. Gly-66 contributes to the GTP binding site. Residue Gln-67 is modified to 5-glutamyl serotonin. Residues Asn-121, Lys-122, Asp-124, Ala-152, and Leu-153 each contribute to the GDP site. 5 residues coordinate GTP: Asn-121, Lys-122, Asp-124, Ala-152, and Leu-153. Phosphoserine occurs at positions 185 and 193. 2 S-geranylgeranyl cysteine lipidation sites follow: Cys-211 and Cys-213. Residue Cys-213 is modified to Cysteine methyl ester.

This sequence belongs to the small GTPase superfamily. Rab family. Interacts (GTP-bound form) with RUFY1; the interaction allows endosomal tethering and fusion. It depends on Mg(2+) as a cofactor. In terms of processing, serotonylation of Gln-67 by TGM2 during activation and aggregation of platelets leads to constitutive activation of GTPase activity.

It is found in the cell membrane. Its subcellular location is the early endosome membrane. The enzyme catalyses GTP + H2O = GDP + phosphate + H(+). With respect to regulation, regulated by guanine nucleotide exchange factors (GEFs) which promote the exchange of bound GDP for free GTP. Regulated by GTPase activating proteins (GAPs) which increase the GTP hydrolysis activity. Inhibited by GDP dissociation inhibitors (GDIs). Functionally, the small GTPases Rab are key regulators of intracellular membrane trafficking, from the formation of transport vesicles to their fusion with membranes. Rabs cycle between an inactive GDP-bound form and an active GTP-bound form that is able to recruit to membranes different set of downstream effectors directly responsible for vesicle formation, movement, tethering and fusion. RAB4B mediates endosomal tethering and fusion through the interaction with RUFY1 and RAB14. Acts as a regulator of platelet alpha-granule release during activation and aggregation of platelets. The protein is Ras-related protein Rab-4B of Homo sapiens (Human).